The following is a 192-amino-acid chain: Transcription termination/antitermination protein NusG (192 aa).

In terms of domain architecture, KOW spans 140–168; it reads VGEVVTVTDGPFETFMGTVEEIDKERNRL.

The protein belongs to the NusG family.

Its function is as follows. Participates in transcription elongation, termination and antitermination. This is Transcription termination/antitermination protein NusG from Rickettsia typhi (strain ATCC VR-144 / Wilmington).